Here is an 81-residue protein sequence, read N- to C-terminus: Photosystem I iron-sulfur center (81 aa).

4Fe-4S ferredoxin-type domains lie at 2–31 (SHSV…MIPW) and 39–68 (IASA…VRVY). [4Fe-4S] cluster is bound by residues cysteine 11, cysteine 14, cysteine 17, cysteine 21, cysteine 48, cysteine 51, cysteine 54, and cysteine 58.

In terms of assembly, the eukaryotic PSI reaction center is composed of at least 11 subunits. Requires [4Fe-4S] cluster as cofactor.

Its subcellular location is the plastid. The protein localises to the chloroplast thylakoid membrane. It carries out the reaction reduced [plastocyanin] + hnu + oxidized [2Fe-2S]-[ferredoxin] = oxidized [plastocyanin] + reduced [2Fe-2S]-[ferredoxin]. Apoprotein for the two 4Fe-4S centers FA and FB of photosystem I (PSI); essential for photochemical activity. FB is the terminal electron acceptor of PSI, donating electrons to ferredoxin. The C-terminus interacts with PsaA/B/D and helps assemble the protein into the PSI complex. Required for binding of PsaD and PsaE to PSI. PSI is a plastocyanin-ferredoxin oxidoreductase, converting photonic excitation into a charge separation, which transfers an electron from the donor P700 chlorophyll pair to the spectroscopically characterized acceptors A0, A1, FX, FA and FB in turn. The chain is Photosystem I iron-sulfur center from Phalaenopsis aphrodite subsp. formosana (Moth orchid).